The chain runs to 276 residues: 2-dehydro-3-deoxyphosphooctonate aldolase (276 aa).

This sequence belongs to the KdsA family.

It localises to the cytoplasm. It carries out the reaction D-arabinose 5-phosphate + phosphoenolpyruvate + H2O = 3-deoxy-alpha-D-manno-2-octulosonate-8-phosphate + phosphate. It functions in the pathway carbohydrate biosynthesis; 3-deoxy-D-manno-octulosonate biosynthesis; 3-deoxy-D-manno-octulosonate from D-ribulose 5-phosphate: step 2/3. The protein operates within bacterial outer membrane biogenesis; lipopolysaccharide biosynthesis. This Chelativorans sp. (strain BNC1) protein is 2-dehydro-3-deoxyphosphooctonate aldolase.